The following is a 109-amino-acid chain: Iron-sulfur cluster assembly protein CyaY (109 aa).

The protein belongs to the frataxin family.

Involved in iron-sulfur (Fe-S) cluster assembly. May act as a regulator of Fe-S biogenesis. This Shewanella putrefaciens (strain CN-32 / ATCC BAA-453) protein is Iron-sulfur cluster assembly protein CyaY.